Reading from the N-terminus, the 458-residue chain is MSTPPSSLIFTVSRLNKTVRELLEGEMGQIWLTGEISNFSQPASGHWYFTLKDDRAQVRCAMFRNTNRRTTFAPRNGQQVLVRASLTLYEPRGDYQLIAESMQPAGDGLLQQQFEQLKQQLSDEGLFSQQFKQPLPSPARRVGVITSASGAALHDILQVLQRRDPSLPVVIYPTAVQGQEAPAQILRALEAANRRAECDVLIVGRGGGSLEDLASFNDERVARAIFASRLPVVSAVGHETDVTIADFVADLRAPTPSAAAELVSRNQLELLRQLQSQQQRLEMAMDYFLAQRQQRYSRLQHRLQQQHPQLRLARQHTALMTLRRRLDDGVQGQLRQAQRRHDYVRQRMVQQAPAARINRAQQRLQALRYQLSQGISLRVNRQNNAFVALCSRLEGMSPLKTLARGFSVTTDSHGAVVKQTRQLSAGDRLTTRLRDGWVESQVTEITRQPARRPRRSQD.

The protein belongs to the XseA family. In terms of assembly, heterooligomer composed of large and small subunits.

Its subcellular location is the cytoplasm. The catalysed reaction is Exonucleolytic cleavage in either 5'- to 3'- or 3'- to 5'-direction to yield nucleoside 5'-phosphates.. Functionally, bidirectionally degrades single-stranded DNA into large acid-insoluble oligonucleotides, which are then degraded further into small acid-soluble oligonucleotides. The sequence is that of Exodeoxyribonuclease 7 large subunit from Sodalis glossinidius (strain morsitans).